The primary structure comprises 265 residues: Phosphonoacetaldehyde hydrolase (265 aa).

The active-site Nucleophile is the aspartate 9. The Mg(2+) site is built by aspartate 9 and alanine 11. The active-site Schiff-base intermediate with substrate is lysine 50. Aspartate 184 is a Mg(2+) binding site.

The protein belongs to the HAD-like hydrolase superfamily. PhnX family. Homodimer. It depends on Mg(2+) as a cofactor.

The catalysed reaction is phosphonoacetaldehyde + H2O = acetaldehyde + phosphate + H(+). In terms of biological role, involved in phosphonate degradation. This is Phosphonoacetaldehyde hydrolase from Lactiplantibacillus plantarum (strain ATCC BAA-793 / NCIMB 8826 / WCFS1) (Lactobacillus plantarum).